We begin with the raw amino-acid sequence, 1040 residues long: Multidrug resistance protein MdtB (1040 aa).

Transmembrane regions (helical) follow at residues 25–45 (LLMA…PVAA), 347–367 (LMLA…NIPA), 369–389 (IIPG…MVFL), 396–416 (LTLM…IVVI), 440–460 (IGFT…PLLF), 472–492 (FAVT…TLTP), 537–557 (WLTL…WIVI), 863–883 (LGST…VLGV), 888–908 (FIHP…ALLA), 910–930 (IIAG…LIGI), 968–988 (ILMT…STGV), and 998–1018 (IAMV…TPVI).

It belongs to the resistance-nodulation-cell division (RND) (TC 2.A.6) family. MdtB subfamily. In terms of assembly, part of a tripartite efflux system composed of MdtA, MdtB and MdtC. MdtB forms a heteromultimer with MdtC.

Its subcellular location is the cell inner membrane. In Salmonella agona (strain SL483), this protein is Multidrug resistance protein MdtB.